Reading from the N-terminus, the 107-residue chain is Putative double-stranded DNA mimic protein HI_1450 (107 aa).

Belongs to the putative dsDNA mimic protein family. In terms of assembly, monomer in solution. Interacts with the DNA-binding protein HU.

Functionally, may act as a double-stranded DNA (dsDNA) mimic. Probably regulates the activity of the DNA-binding protein HU. This Haemophilus influenzae (strain ATCC 51907 / DSM 11121 / KW20 / Rd) protein is Putative double-stranded DNA mimic protein HI_1450.